The following is a 261-amino-acid chain: Hydroxyethylthiazole kinase (261 aa).

Methionine 40 lines the substrate pocket. Positions 116 and 162 each coordinate ATP. Glycine 189 lines the substrate pocket.

It belongs to the Thz kinase family. Mg(2+) is required as a cofactor.

The enzyme catalyses 5-(2-hydroxyethyl)-4-methylthiazole + ATP = 4-methyl-5-(2-phosphooxyethyl)-thiazole + ADP + H(+). Its pathway is cofactor biosynthesis; thiamine diphosphate biosynthesis; 4-methyl-5-(2-phosphoethyl)-thiazole from 5-(2-hydroxyethyl)-4-methylthiazole: step 1/1. In terms of biological role, catalyzes the phosphorylation of the hydroxyl group of 4-methyl-5-beta-hydroxyethylthiazole (THZ). The protein is Hydroxyethylthiazole kinase of Methanosarcina acetivorans (strain ATCC 35395 / DSM 2834 / JCM 12185 / C2A).